A 61-amino-acid chain; its full sequence is UPF0434 protein Avin_14770 (61 aa).

Belongs to the UPF0434 family.

The chain is UPF0434 protein Avin_14770 from Azotobacter vinelandii (strain DJ / ATCC BAA-1303).